The following is a 223-amino-acid chain: Killer cell lectin-like receptor subfamily B member 1B allele A (223 aa).

Residues 1–45 lie on the Cytoplasmic side of the membrane; the sequence is MDTAVVYADLHLARTGEPKREPPPSLSPDTCQCPRWHRLALKLGC. An ITIM motif motif is present at residues 5-10; it reads VVYADL. The LCK-binding motif signature appears at 31-34; it reads CQCP. Residues 46–66 form a helical; Signal-anchor for type II membrane protein membrane-spanning segment; sequence ACLILLVLSVIGLGVLVLTLL. The Extracellular portion of the chain corresponds to 67–223; it reads QKPLIQNSPA…LKRESTCNDS (157 aa). One can recognise a C-type lectin domain in the interval 101-211; it reads HQDKCFHVSQ…CDSDNIWICQ (111 aa). Disulfide bonds link cysteine 122–cysteine 210 and cysteine 189–cysteine 202.

In terms of assembly, homodimer; disulfide-linked. Interacts with tyrosine kinase LCK. Binds PTPN6/SHP-1 in a phosphorylation-dependent manner. In terms of tissue distribution, expressed in a subset of natural killer cells.

The protein resides in the membrane. In terms of biological role, receptor for CLEC2D/OCIL. Ligand-binding contributes to inhibition of cytotoxic natural killer (NK) cells. May mediate MHC class I-independent 'missing-self' recognition of allografts, tumor cells and virus-infected cells. The protein is Killer cell lectin-like receptor subfamily B member 1B allele A of Rattus norvegicus (Rat).